Reading from the N-terminus, the 481-residue chain is Ribulose bisphosphate carboxylase large chain (481 aa).

Positions 1-2 (MS) are excised as a propeptide. P3 carries the N-acetylproline modification. K14 carries the N6,N6,N6-trimethyllysine modification. The substrate site is built by N123 and T173. Residue K175 is the Proton acceptor of the active site. K177 is a substrate binding site. Residues K201, D203, and E204 each contribute to the Mg(2+) site. K201 carries the N6-carboxylysine modification. H294 serves as the catalytic Proton acceptor. The substrate site is built by R295, H327, and S379.

Belongs to the RuBisCO large chain family. Type I subfamily. Heterohexadecamer of 8 large chains and 8 small chains; disulfide-linked. The disulfide link is formed within the large subunit homodimers. It depends on Mg(2+) as a cofactor. In terms of processing, the disulfide bond which can form in the large chain dimeric partners within the hexadecamer appears to be associated with oxidative stress and protein turnover.

It is found in the plastid. It catalyses the reaction 2 (2R)-3-phosphoglycerate + 2 H(+) = D-ribulose 1,5-bisphosphate + CO2 + H2O. The catalysed reaction is D-ribulose 1,5-bisphosphate + O2 = 2-phosphoglycolate + (2R)-3-phosphoglycerate + 2 H(+). Its function is as follows. RuBisCO catalyzes two reactions: the carboxylation of D-ribulose 1,5-bisphosphate, the primary event in carbon dioxide fixation, as well as the oxidative fragmentation of the pentose substrate in the photorespiration process. Both reactions occur simultaneously and in competition at the same active site. In Cuscuta obtusiflora (Peruvian dodder), this protein is Ribulose bisphosphate carboxylase large chain.